The following is a 783-amino-acid chain: ATP-dependent zinc metalloprotease FtsH (783 aa).

The segment covering 1-16 (MSETPNTNEQNNPNNQ) has biased composition (low complexity). The tract at residues 1 to 79 (MSETPNTNEQ…DKEEDFASRL (79 aa)) is disordered. Residues 1–86 (MSETPNTNEQ…SRLNTRPPQR (86 aa)) lie on the Cytoplasmic side of the membrane. The span at 35–61 (MPERPERHNQADGAPKRPGDDDRKSER) shows a compositional bias: basic and acidic residues. A helical transmembrane segment spans residues 87–107 (ASIITIIIIFLVAFFIGSQMM). The Extracellular portion of the chain corresponds to 108–233 (NMVHGEETDD…EYQVTLPSNV (126 aa)). A helical membrane pass occupies residues 234 to 254 (TEILISVLPMLLFAGLLIYFF). Residues 255–783 (SQMSKANNSQ…APQPPAAPQQ (529 aa)) lie on the Cytoplasmic side of the membrane. ATP is bound at residue 325–332 (GPPGTGKT). Histidine 547 contributes to the Zn(2+) binding site. Glutamate 548 is an active-site residue. Histidine 551 and aspartate 623 together coordinate Zn(2+). A compositionally biased stretch (low complexity) spans 738–771 (EAAAKAADQAEQPQVEAEPVAQVATPAAPVAPAV). Positions 738-783 (EAAAKAADQAEQPQVEAEPVAQVATPAAPVAPAVPEAPQPPAAPQQ) are disordered. Over residues 772 to 783 (PEAPQPPAAPQQ) the composition is skewed to pro residues.

It in the central section; belongs to the AAA ATPase family. The protein in the C-terminal section; belongs to the peptidase M41 family. As to quaternary structure, homohexamer. Zn(2+) serves as cofactor.

Its subcellular location is the cell membrane. Acts as a processive, ATP-dependent zinc metallopeptidase for both cytoplasmic and membrane proteins. Plays a role in the quality control of integral membrane proteins. In Slackia heliotrinireducens (strain ATCC 29202 / DSM 20476 / NCTC 11029 / RHS 1) (Peptococcus heliotrinreducens), this protein is ATP-dependent zinc metalloprotease FtsH.